The sequence spans 443 residues: Phosphoglucosamine mutase (443 aa).

The active-site Phosphoserine intermediate is the Ser103. The Mg(2+) site is built by Ser103, Asp244, Asp246, and Asp248. Position 103 is a phosphoserine (Ser103).

Belongs to the phosphohexose mutase family. Mg(2+) serves as cofactor. In terms of processing, activated by phosphorylation.

The enzyme catalyses alpha-D-glucosamine 1-phosphate = D-glucosamine 6-phosphate. In terms of biological role, catalyzes the conversion of glucosamine-6-phosphate to glucosamine-1-phosphate. This is Phosphoglucosamine mutase from Pelagibacter ubique (strain HTCC1062).